A 326-amino-acid polypeptide reads, in one-letter code: Undecaprenyl-phosphate 4-deoxy-4-formamido-L-arabinose transferase (326 aa).

A run of 2 helical transmembrane segments spans residues 234 to 254 (LLSI…ILLI) and 269 to 289 (VFTL…GMGL).

Belongs to the glycosyltransferase 2 family.

The protein resides in the cell inner membrane. It catalyses the reaction UDP-4-deoxy-4-formamido-beta-L-arabinose + di-trans,octa-cis-undecaprenyl phosphate = 4-deoxy-4-formamido-alpha-L-arabinopyranosyl di-trans,octa-cis-undecaprenyl phosphate + UDP. It functions in the pathway glycolipid biosynthesis; 4-amino-4-deoxy-alpha-L-arabinose undecaprenyl phosphate biosynthesis; 4-amino-4-deoxy-alpha-L-arabinose undecaprenyl phosphate from UDP-4-deoxy-4-formamido-beta-L-arabinose and undecaprenyl phosphate: step 1/2. Its pathway is bacterial outer membrane biogenesis; lipopolysaccharide biosynthesis. Functionally, catalyzes the transfer of 4-deoxy-4-formamido-L-arabinose from UDP to undecaprenyl phosphate. The modified arabinose is attached to lipid A and is required for resistance to polymyxin and cationic antimicrobial peptides. This is Undecaprenyl-phosphate 4-deoxy-4-formamido-L-arabinose transferase from Aeromonas hydrophila subsp. hydrophila (strain ATCC 7966 / DSM 30187 / BCRC 13018 / CCUG 14551 / JCM 1027 / KCTC 2358 / NCIMB 9240 / NCTC 8049).